The chain runs to 472 residues: Sodium-coupled neutral amino acid transporter 5 (472 aa).

Met1 is modified (N-acetylmethionine). Topologically, residues 1–48 are cytoplasmic; it reads MELQDPKMNGALPSDAVGYRQEREGFLPSRGPAPGSKPVQFMDFEGKT. The chain crosses the membrane as a helical span at residues 49-71; the sequence is SFGMSVFNLSNAIMGSGILGLAY. Residues 72-87 are Extracellular-facing; it reads AMAHTGVIFFLALLLC. The helical transmembrane segment at 88-108 threads the bilayer; that stretch reads IALLSSYSIHLLLTCAGIAGI. Topologically, residues 109–125 are cytoplasmic; the sequence is RAYEQLGQRAFGPAGKV. Residues 126–146 form a helical membrane-spanning segment; the sequence is VVATVICLHNVGAMSSYLFII. The Extracellular portion of the chain corresponds to 147 to 166; it reads KSELPLVIGTFLYMDPEGDW. A helical membrane pass occupies residues 167–187; that stretch reads FLKGNLLIIIVSVLIILPLAL. Over 188-192 the chain is Cytoplasmic; the sequence is MKHLG. Residues 193–213 traverse the membrane as a helical segment; sequence YLGYTSGLSLTCMLFFLVSVI. Topologically, residues 214–257 are extracellular; the sequence is YKKFQLGCAIGHNETAMESEALVGLPSQGLNSSCEAQMFTVDSQ. Cysteines 221 and 247 form a disulfide. Asn226 carries an N-linked (GlcNAc...) asparagine glycan. Residues 258 to 278 form a helical membrane-spanning segment; it reads MSYTVPIMAFAFVCHPEVLPI. Over 279-295 the chain is Cytoplasmic; that stretch reads YTELCRPSKRRMQAVAN. The helical transmembrane segment at 296-316 threads the bilayer; the sequence is VSIGAMFCMYGLTATFGYLTF. At 317 to 334 the chain is on the extracellular side; sequence YSSVKAEMLHMYSQKDPL. The helical transmembrane segment at 335–355 threads the bilayer; it reads ILCVRLAVLLAVTLTVPVVLF. Topologically, residues 356–376 are cytoplasmic; it reads PIRRALQQLLFPGKAFSWPRH. The chain crosses the membrane as a helical span at residues 377 to 397; it reads VAIALILLVLVNVLVICVPTI. Over 398-399 the chain is Extracellular; sequence RD. The chain crosses the membrane as a helical span at residues 400–420; the sequence is IFGVIGSTSAPSLIFILPSIF. Residues 421 to 439 are Cytoplasmic-facing; it reads YLRIVPSEVEPFLSWPKIQ. A helical transmembrane segment spans residues 440 to 460; it reads ALCFGVLGVLFMAVSLGFMFA. Over 461-472 the chain is Extracellular; sequence NWATGQSRMSGH.

The protein belongs to the amino acid/polyamine transporter 2 family. In terms of tissue distribution, predominantly expressed in stomach, brain, liver, lung and intestinal tract.

The protein resides in the cell membrane. The enzyme catalyses L-serine(out) + Na(+)(out) + H(+)(in) = L-serine(in) + Na(+)(in) + H(+)(out). It carries out the reaction L-alanine(out) + Na(+)(out) + H(+)(in) = L-alanine(in) + Na(+)(in) + H(+)(out). It catalyses the reaction glycine(out) + Na(+)(out) + H(+)(in) = glycine(in) + Na(+)(in) + H(+)(out). The catalysed reaction is L-glutamine(out) + Na(+)(out) + H(+)(in) = L-glutamine(in) + Na(+)(in) + H(+)(out). The enzyme catalyses L-asparagine(out) + Na(+)(out) + H(+)(in) = L-asparagine(in) + Na(+)(in) + H(+)(out). It carries out the reaction L-histidine(out) + Na(+)(out) + H(+)(in) = L-histidine(in) + Na(+)(in) + H(+)(out). It catalyses the reaction L-cysteine(out) + Na(+)(out) + H(+)(in) = L-cysteine(in) + Na(+)(in) + H(+)(out). With respect to regulation, not inhibited by lithium. Partial allosteric regulation on ions sodium binding. Its function is as follows. Symporter that cotransports neutral amino acids and sodium ions, coupled to an H(+) antiporter activity. Releases L-glutamine and glycine from astroglial cells and may participate in the glutamate/GABA-L-glutamine cycle and the NMDA receptors activation. In addition, contributes significantly to L-glutamine uptake in retina, namely in ganglion and Mueller cells therefore, participates in the retinal glutamate-glutamine cycle. The transport activity is pH sensitive and Li(+) tolerant. Moreover functions in both direction and is associated with large uncoupled fluxes of protons. The transport is electroneutral coupled to the cotransport of 1 Na(+) and the antiport of 1 H(+). May have a particular importance for modulation of net hepatic glutamine flux. This chain is Sodium-coupled neutral amino acid transporter 5 (SLC38A5), found in Homo sapiens (Human).